A 441-amino-acid polypeptide reads, in one-letter code: ATP-dependent protease ATPase subunit HslU (441 aa).

Residues Ile18, 60–65, Asp254, Glu319, and Arg391 each bind ATP; that span reads GVGKTE.

Belongs to the ClpX chaperone family. HslU subfamily. A double ring-shaped homohexamer of HslV is capped on each side by a ring-shaped HslU homohexamer. The assembly of the HslU/HslV complex is dependent on binding of ATP.

The protein resides in the cytoplasm. In terms of biological role, ATPase subunit of a proteasome-like degradation complex; this subunit has chaperone activity. The binding of ATP and its subsequent hydrolysis by HslU are essential for unfolding of protein substrates subsequently hydrolyzed by HslV. HslU recognizes the N-terminal part of its protein substrates and unfolds these before they are guided to HslV for hydrolysis. This is ATP-dependent protease ATPase subunit HslU from Shewanella woodyi (strain ATCC 51908 / MS32).